A 299-amino-acid chain; its full sequence is Probable lipid kinase YegS (299 aa).

Residues 2-133 enclose the DAGKc domain; the sequence is ADLPASLLIL…IDIAQVNKET (132 aa). ATP contacts are provided by residues Thr40, 66-72, and Thr95; that span reads GDGTINE. Mg(2+) contacts are provided by Leu215, Asp218, and Leu220. Glu271 functions as the Proton acceptor in the catalytic mechanism.

It belongs to the diacylglycerol/lipid kinase family. YegS lipid kinase subfamily. Mg(2+) serves as cofactor. It depends on Ca(2+) as a cofactor.

It is found in the cytoplasm. Probably phosphorylates lipids; the in vivo substrate is unknown. The chain is Probable lipid kinase YegS from Escherichia fergusonii (strain ATCC 35469 / DSM 13698 / CCUG 18766 / IAM 14443 / JCM 21226 / LMG 7866 / NBRC 102419 / NCTC 12128 / CDC 0568-73).